Reading from the N-terminus, the 377-residue chain is Carboxynorspermidine/carboxyspermidine decarboxylase (377 aa).

Lysine 41 carries the post-translational modification N6-(pyridoxal phosphate)lysine. Glutamate 238 and aspartate 274 together coordinate substrate.

It belongs to the Orn/Lys/Arg decarboxylase class-II family. NspC subfamily. As to quaternary structure, homodimer. The cofactor is pyridoxal 5'-phosphate.

It localises to the cytoplasm. The catalysed reaction is carboxynorspermidine + H(+) = norspermidine + CO2. It catalyses the reaction carboxyspermidine + H(+) = spermidine + CO2. Its function is as follows. Catalyzes the decarboxylation of carboxynorspermidine and carboxyspermidine. Carboxynorspermidine is decarboxylated 20-fold more efficiently than carboxyspermidine. Exhibits some activity with L-ornithine, but shows no activity with L-arginine, L-lysine or meso-diaminopimelate. This is Carboxynorspermidine/carboxyspermidine decarboxylase from Vibrio vulnificus (strain CMCP6).